We begin with the raw amino-acid sequence, 258 residues long: Methylthioribulose-1-phosphate dehydratase (258 aa).

Over residues 1-20 (MTPPSNGQAAETNDHLVQSD) the composition is skewed to polar residues. Positions 1–21 (MTPPSNGQAAETNDHLVQSDN) are disordered. Cysteine 105 provides a ligand contact to substrate. Positions 123 and 125 each coordinate Zn(2+). The active-site Proton donor/acceptor is the glutamate 153. Histidine 210 is a Zn(2+) binding site.

The protein belongs to the aldolase class II family. MtnB subfamily. The cofactor is Zn(2+).

It localises to the cytoplasm. The catalysed reaction is 5-(methylsulfanyl)-D-ribulose 1-phosphate = 5-methylsulfanyl-2,3-dioxopentyl phosphate + H2O. It participates in amino-acid biosynthesis; L-methionine biosynthesis via salvage pathway; L-methionine from S-methyl-5-thio-alpha-D-ribose 1-phosphate: step 2/6. Catalyzes the dehydration of methylthioribulose-1-phosphate (MTRu-1-P) into 2,3-diketo-5-methylthiopentyl-1-phosphate (DK-MTP-1-P). The sequence is that of Methylthioribulose-1-phosphate dehydratase from Chaetomium globosum (strain ATCC 6205 / CBS 148.51 / DSM 1962 / NBRC 6347 / NRRL 1970) (Soil fungus).